A 242-amino-acid polypeptide reads, in one-letter code: MLHNPLVQFDIKKLIDIKVMDFDISFTNSAAYMLLASVLALTYFYLAFSNPRLVPSRLQISGEIIYNLVTDMLNQNVGSKGRKFVPVIFTLFVFILFCNLFGMIPYGFTVTSHIIITFALAILVFLMVTIVGFVKHGMHFLSLFLPHGTPLWLAPLMIIIELFTYLARPASLSLRLAANMMAGHILLKVIASFVITLMIYLKFLPIPLMVILIGFEIFVAILQAYIFTILSCVYLNDAVNLH.

The next 6 helical transmembrane spans lie at 29-49 (SAAY…LAFS), 84-104 (FVPV…FGMI), 114-134 (IIIT…VGFV), 140-160 (FLSL…MIII), 189-209 (VIAS…IPLM), and 210-230 (VILI…FTIL).

Belongs to the ATPase A chain family. In terms of assembly, F-type ATPases have 2 components, CF(1) - the catalytic core - and CF(0) - the membrane proton channel. CF(1) has five subunits: alpha(3), beta(3), gamma(1), delta(1), epsilon(1). CF(0) has three main subunits: a(1), b(2) and c(9-12). The alpha and beta chains form an alternating ring which encloses part of the gamma chain. CF(1) is attached to CF(0) by a central stalk formed by the gamma and epsilon chains, while a peripheral stalk is formed by the delta and b chains.

It is found in the cell inner membrane. In terms of biological role, key component of the proton channel; it plays a direct role in the translocation of protons across the membrane. This Rickettsia bellii (strain OSU 85-389) protein is ATP synthase subunit a.